The primary structure comprises 141 residues: Large ribosomal subunit protein uL11 (141 aa).

It belongs to the universal ribosomal protein uL11 family. Part of the ribosomal stalk of the 50S ribosomal subunit. Interacts with L10 and the large rRNA to form the base of the stalk. L10 forms an elongated spine to which L12 dimers bind in a sequential fashion forming a multimeric L10(L12)X complex. Post-translationally, one or more lysine residues are methylated.

In terms of biological role, forms part of the ribosomal stalk which helps the ribosome interact with GTP-bound translation factors. The polypeptide is Large ribosomal subunit protein uL11 (Streptococcus agalactiae serotype Ia (strain ATCC 27591 / A909 / CDC SS700)).